The sequence spans 87 residues: MSVKIRLARFGAKKRPFYRVVVADSRVARDGKFIESLGFYNPMLPKEHELFVKVKVDRLKYWLSVGAQATDRISWFIKKGIINIETA.

The protein belongs to the bacterial ribosomal protein bS16 family.

In Ehrlichia chaffeensis (strain ATCC CRL-10679 / Arkansas), this protein is Small ribosomal subunit protein bS16.